The chain runs to 481 residues: Sterol 14-alpha demethylase (481 aa).

Residues 1 to 21 (MFIEAIVLALTALILYSVYSV) traverse the membrane as a helical segment. Cysteine 422 serves as a coordination point for heme.

It belongs to the cytochrome P450 family. Heme serves as cofactor.

The protein localises to the membrane. It carries out the reaction a 14alpha-methyl steroid + 3 reduced [NADPH--hemoprotein reductase] + 3 O2 = a Delta(14) steroid + formate + 3 oxidized [NADPH--hemoprotein reductase] + 4 H2O + 4 H(+). The protein operates within steroid biosynthesis; zymosterol biosynthesis; zymosterol from lanosterol: step 1/6. Functionally, catalyzes C14-demethylation of lanosterol which is critical for ergosterol biosynthesis. It transforms lanosterol into 4,4'-dimethyl cholesta-8,14,24-triene-3-beta-ol. Favors C4 dimethylated substrates, the substrate preference order is 24-methylenedihydrolanosterol &gt; 24,25-dihydrolanosterol &gt; lanosterol &gt; obtusifoliol &gt; norlanosterol. This chain is Sterol 14-alpha demethylase, found in Trypanosoma cruzi (strain CL Brener).